We begin with the raw amino-acid sequence, 327 residues long: GTPase Obg (327 aa).

The region spanning 1–159 (MQFIDQANII…WEVQLELKLL (159 aa)) is the Obg domain. The OBG-type G domain maps to 160–327 (AEVGIIGLPN…SLLSEVWKRI (168 aa)). Residues 166–173 (GLPNAGKS), 191–195 (FTTLI), 213–216 (DIPG), 280–283 (NKME), and 309–311 (SSS) each bind ATP. Ser-173 and Thr-193 together coordinate Mg(2+).

The protein belongs to the TRAFAC class OBG-HflX-like GTPase superfamily. OBG GTPase family. Monomer. It depends on Mg(2+) as a cofactor.

It is found in the cytoplasm. Its function is as follows. An essential GTPase which binds GTP, GDP and possibly (p)ppGpp with moderate affinity, with high nucleotide exchange rates and a fairly low GTP hydrolysis rate. Plays a role in control of the cell cycle, stress response, ribosome biogenesis and in those bacteria that undergo differentiation, in morphogenesis control. The chain is GTPase Obg from Prochlorococcus marinus (strain MIT 9301).